Here is a 215-residue protein sequence, read N- to C-terminus: LysM and putative peptidoglycan-binding domain-containing protein 2 (215 aa).

The segment at 1-40 (MADSSPALSLREGGPRAPRPSAPSPPPRSRSGSESEEAEL) is disordered. Ala-2 is subject to N-acetylalanine. Phosphoserine is present on residues Ser-5, Ser-24, Ser-33, and Ser-57. Residues 17–28 (APRPSAPSPPPR) are compositionally biased toward pro residues. The region spanning 71–115 (VEHRVRAGDTLQGIALKYGVTMEQIKRANKLFTNDCIFLKKTLNI) is the LysM domain. Disordered stretches follow at residues 132–175 (DSPE…EEVS) and 193–215 (AAKKLKEESRDEESPYATSLYHS). The span at 196-205 (KLKEESRDEE) shows a compositional bias: basic and acidic residues.

The polypeptide is LysM and putative peptidoglycan-binding domain-containing protein 2 (LYSMD2) (Homo sapiens (Human)).